A 632-amino-acid polypeptide reads, in one-letter code: 1-deoxy-D-xylulose-5-phosphate synthase (632 aa).

Thiamine diphosphate is bound by residues histidine 74 and 115–117; that span reads AHS. Aspartate 146 is a binding site for Mg(2+). Thiamine diphosphate is bound by residues 147 to 148, asparagine 176, tyrosine 283, and glutamate 365; that span reads GA. Residue asparagine 176 participates in Mg(2+) binding.

Belongs to the transketolase family. DXPS subfamily. As to quaternary structure, homodimer. The cofactor is Mg(2+). Requires thiamine diphosphate as cofactor.

The enzyme catalyses D-glyceraldehyde 3-phosphate + pyruvate + H(+) = 1-deoxy-D-xylulose 5-phosphate + CO2. It functions in the pathway metabolic intermediate biosynthesis; 1-deoxy-D-xylulose 5-phosphate biosynthesis; 1-deoxy-D-xylulose 5-phosphate from D-glyceraldehyde 3-phosphate and pyruvate: step 1/1. Its function is as follows. Catalyzes the acyloin condensation reaction between C atoms 2 and 3 of pyruvate and glyceraldehyde 3-phosphate to yield 1-deoxy-D-xylulose-5-phosphate (DXP). This chain is 1-deoxy-D-xylulose-5-phosphate synthase, found in Paraburkholderia phymatum (strain DSM 17167 / CIP 108236 / LMG 21445 / STM815) (Burkholderia phymatum).